We begin with the raw amino-acid sequence, 152 residues long: 3-hydroxyacyl-[acyl-carrier-protein] dehydratase FabZ (152 aa).

His-57 is an active-site residue.

Belongs to the thioester dehydratase family. FabZ subfamily.

Its subcellular location is the cytoplasm. It carries out the reaction a (3R)-hydroxyacyl-[ACP] = a (2E)-enoyl-[ACP] + H2O. In terms of biological role, involved in unsaturated fatty acids biosynthesis. Catalyzes the dehydration of short chain beta-hydroxyacyl-ACPs and long chain saturated and unsaturated beta-hydroxyacyl-ACPs. In Pasteurella multocida (strain Pm70), this protein is 3-hydroxyacyl-[acyl-carrier-protein] dehydratase FabZ.